The primary structure comprises 237 residues: Mediator of RNA polymerase II transcription subunit 20 (237 aa).

This sequence belongs to the Mediator complex subunit 20 family. In terms of assembly, component of the Mediator complex.

It localises to the nucleus. In terms of biological role, component of the Mediator complex, a coactivator involved in the regulated transcription of nearly all RNA polymerase II-dependent genes. Mediator functions as a bridge to convey information from gene-specific regulatory proteins to the basal RNA polymerase II transcription machinery. Mediator is recruited to promoters by direct interactions with regulatory proteins and serves as a scaffold for the assembly of a functional preinitiation complex with RNA polymerase II and the general transcription factors. The sequence is that of Mediator of RNA polymerase II transcription subunit 20 (SRB2) from Scheffersomyces stipitis (strain ATCC 58785 / CBS 6054 / NBRC 10063 / NRRL Y-11545) (Yeast).